We begin with the raw amino-acid sequence, 963 residues long: Bifunctional glutamine synthetase adenylyltransferase/adenylyl-removing enzyme (963 aa).

The tract at residues 1–451 is adenylyl removase; the sequence is MAAPSELQLY…EHFADIIAER (451 aa). The segment at 461–963 is adenylyl transferase; sequence TIEWKALWAG…VAFWEKVFAE (503 aa).

This sequence belongs to the GlnE family. The cofactor is Mg(2+).

The catalysed reaction is [glutamine synthetase]-O(4)-(5'-adenylyl)-L-tyrosine + phosphate = [glutamine synthetase]-L-tyrosine + ADP. The enzyme catalyses [glutamine synthetase]-L-tyrosine + ATP = [glutamine synthetase]-O(4)-(5'-adenylyl)-L-tyrosine + diphosphate. Functionally, involved in the regulation of glutamine synthetase GlnA, a key enzyme in the process to assimilate ammonia. When cellular nitrogen levels are high, the C-terminal adenylyl transferase (AT) inactivates GlnA by covalent transfer of an adenylyl group from ATP to specific tyrosine residue of GlnA, thus reducing its activity. Conversely, when nitrogen levels are low, the N-terminal adenylyl removase (AR) activates GlnA by removing the adenylyl group by phosphorolysis, increasing its activity. The regulatory region of GlnE binds the signal transduction protein PII (GlnB) which indicates the nitrogen status of the cell. The polypeptide is Bifunctional glutamine synthetase adenylyltransferase/adenylyl-removing enzyme (Hahella chejuensis (strain KCTC 2396)).